The following is an 841-amino-acid chain: Rhomboid-like protease 5 (841 aa).

A compositionally biased stretch (low complexity) spans 1-10 (MSSKGGSSRL). Residues 1-289 (MSSKGGSSRL…GGDGGPRRHS (289 aa)) are disordered. The segment covering 11–51 (GSKDLKKMTSRTERELRDSGRVRGEVERVEKRLRATAKVKE) has biased composition (basic and acidic residues). Residues 95–132 (LRPASSSPRLASSSRPTESTLPSSSSRALQGASSSSSS) show a composition bias toward low complexity. Composition is skewed to basic and acidic residues over residues 154–163 (LRQEKKRLPE), 209–230 (RTAE…RGSV), and 243–275 (SSHE…RSGD). The next 6 helical transmembrane spans lie at 323–343 (FLMI…ELVL), 464–484 (MFRV…LLNV), 492–512 (WILE…VGGV), 526–546 (VTVG…PFSI), 571–590 (FGNM…GGLI), and 673–693 (FAAA…LLVP). Ser-531 functions as the Nucleophile in the catalytic mechanism. Residue His-585 is part of the active site.

The protein belongs to the peptidase S54 family.

It localises to the membrane. The enzyme catalyses Cleaves type-1 transmembrane domains using a catalytic dyad composed of serine and histidine that are contributed by different transmembrane domains.. Functionally, serine protease involved in intramembrane proteolysis. Cleaves microneme adhesins, such as MIC2. This step is essential for efficient invasion of host cells. Catalyzes intramembrane proteolysis of AMA1. The protein is Rhomboid-like protease 5 (ROM5) of Toxoplasma gondii.